The sequence spans 1054 residues: Putative disease resistance RPP13-like protein 1 (1054 aa).

2 leucine-zipper regions span residues 9 to 20 (LAAFLQALFQTL) and 39 to 53 (LERL…TAVL). A coiled-coil region spans residues 117 to 147 (DFLDGNSEHLETRLEKVTIRLERLASQRNIL). One can recognise an NB-ARC domain in the interval 152–462 (LTAMIPKQRL…AEGFLQQTRS (311 aa)). 203–210 (GIGGVGKT) is an ATP binding site. LRR repeat units follow at residues 579-600 (RLRV…FFKN), 603-624 (HARF…LCYM), 626-648 (NLQT…ISNL), 650-672 (NLRY…GRLK), and 676-697 (TLTT…GGLH). A disordered region spans residues 1018 to 1054 (PQYHHPQFHLPRSNVSGSPKSHGSHRSYDSRSSSRYD). The span at 1043-1054 (RSYDSRSSSRYD) shows a compositional bias: basic and acidic residues.

This sequence belongs to the disease resistance NB-LRR family. RPP13 subfamily.

In terms of biological role, potential disease resistance protein. This chain is Putative disease resistance RPP13-like protein 1 (RPPL1), found in Arabidopsis thaliana (Mouse-ear cress).